The chain runs to 219 residues: Uridylate kinase (219 aa).

9–10 serves as a coordination point for ATP; sequence GS. Gly41 lines the UMP pocket. Residues Gly42 and Arg46 each coordinate ATP. UMP contacts are provided by residues Asp63 and 110 to 116; that span reads TFPGHTT. The ATP site is built by Thr136, Asn137, Tyr142, and Asp145.

Belongs to the UMP kinase family. In terms of assembly, homohexamer.

It is found in the cytoplasm. The catalysed reaction is UMP + ATP = UDP + ADP. It participates in pyrimidine metabolism; CTP biosynthesis via de novo pathway; UDP from UMP (UMPK route): step 1/1. With respect to regulation, inhibited by UTP. Its function is as follows. Catalyzes the reversible phosphorylation of UMP to UDP. This chain is Uridylate kinase, found in Archaeoglobus fulgidus (strain ATCC 49558 / DSM 4304 / JCM 9628 / NBRC 100126 / VC-16).